The chain runs to 297 residues: MKHIITPYEHTNDTARNNSDCPDVVLPEEIFFTISIIGVLENLIVLLAVVKNKNLQCPMYFFICSLAISDMLGSLYKILENILIMFRNRGYLQPRGNFESTADDIIDCMFILSLLGSIFSLSVIAADRYITIFHALQYHSIVTMRRTIITLTVIWIFCTGSGIAMVIFSHHVPTVLTFTSLFPLMLVFILCLYIHMFLLARSHARKISTLPRANMKGAITLTILLGVFIFCWAPFILHVLLMTFCPNNPYCVCYMSLFQINGMLIMCNAVIDPFIYAFRSPELRDAFKKMFSCHRYQ.

The Extracellular segment spans residues 1–23 (MKHIITPYEHTNDTARNNSDCPD). 2 N-linked (GlcNAc...) asparagine glycosylation sites follow: Asn12 and Asn17. 2 cysteine pairs are disulfide-bonded: Cys21–Cys253 and Cys245–Cys251. A helical transmembrane segment spans residues 24 to 49 (VVLPEEIFFTISIIGVLENLIVLLAV). Topologically, residues 50–58 (VKNKNLQCP) are cytoplasmic. A helical transmembrane segment spans residues 59–79 (MYFFICSLAISDMLGSLYKIL). The Extracellular portion of the chain corresponds to 80-104 (ENILIMFRNRGYLQPRGNFESTADD). A helical transmembrane segment spans residues 105–126 (IIDCMFILSLLGSIFSLSVIAA). At 127 to 147 (DRYITIFHALQYHSIVTMRRT) the chain is on the cytoplasmic side. The helical transmembrane segment at 148–168 (IITLTVIWIFCTGSGIAMVIF) threads the bilayer. Residues 169-180 (SHHVPTVLTFTS) lie on the Extracellular side of the membrane. Residues 181–199 (LFPLMLVFILCLYIHMFLL) traverse the membrane as a helical segment. At 200–217 (ARSHARKISTLPRANMKG) the chain is on the cytoplasmic side. A helical transmembrane segment spans residues 218-244 (AITLTILLGVFIFCWAPFILHVLLMTF). Over 245–256 (CPNNPYCVCYMS) the chain is Extracellular. The helical transmembrane segment at 257–278 (LFQINGMLIMCNAVIDPFIYAF) threads the bilayer. Over 279 to 297 (RSPELRDAFKKMFSCHRYQ) the chain is Cytoplasmic. The S-palmitoyl cysteine moiety is linked to residue Cys293.

Belongs to the G-protein coupled receptor 1 family. As to quaternary structure, homodimer. Interacts with corticotropin (ACTH). Interacts with MRAP; this interaction targets MC2R to the plasma membrane. Interacts with MRAP2; competing with MRAP for binding to MC2R and impairing the binding of corticotropin (ACTH). Post-translationally, ubiquitinated by MGRN1 that may be involved in post-endocytic trafficking and/or degradation of internalized receptor.

Its subcellular location is the cell membrane. Its function is as follows. Hormone receptor primarily expressed in adrenal cortex that plays a key role in regulating adrenocortical function. Upon corticotropin (ACTH) binding, facilitates the release of adrenal glucocorticoids, including cortisol and corticosterone. In addition, MC2R is required for fetal and neonatal adrenal gland development. Mechanistically, activates adenylate cyclase (cAMP), the MAPK cascade as well as the cAMP-dependent protein kinase A pathway leading to steroidogenic factor 1/NR5A1-mediated transcriptional activation. This Mesocricetus auratus (Golden hamster) protein is Adrenocorticotropic hormone receptor (MC2R).